Consider the following 1855-residue polypeptide: MSSAPTTQQNLAALPAPAMSDTGITSHIASRYHSHLPISTLSTQGYIAVNTYTNSAKGPNGGKDGSAMGAAEELASRMWARLGHRQENQAAIFLGESGTGKTTIRSHLLSSLLQYSSTPLSKKLSFAAFVFDSLTTTKSVTAPTASKAGLFFELQYDTGSSLHPTLIGGKVLDHRLERSRVATVPPGERNFHVLYYLLAGTSDDEKEHLGLNTGITAGTGNRSSLGTQKRWRYLGHPSQLKVGINDAEGFQHFKTALRNLEFPREEIAHMCEILAAILHIGQLEFMTSQSTTPAPDESGGYGHEGGEEITVVKNKDVLSMIAAFLGVGDRTLEQSLGYRTKMLRRERVTIMLDPKGARENADELARTLYSLLVALVMEKINQKTCAVEEAVANTISVVDFPGFADTSSTGSVLDQLLNNAATECLYNFCLQSFFERKAELLETEEVQVPLTSYFDNSDAVKGLLKPGNGLLSILDDQMRRGKTDLQLADSLRKRFEGKNPAIEVTSGTVQLPGANFATQNTSQIFTVKHFAGEVKYPVDGLLEENGEVISGDLMNLVNSSSSPFVAELFGQEALNKVVHPDDRNAVQQASVASKPSRMPSMARRRGGKAGRFGSRRGGDIDEEKDSDEGRARSVSRHRHNPKSADTQQGASAQFLSSLDNINKSLTAPNTNPYFFFCLKPNDRRIANQFDSKCVRQQIQTLGIAELSQRLKNADFSIFMPFGEFLGSAEGEVSVVGSEREKAEMILDEKSWPKNEARVGSTGVFLSERCWRQIVRAGDLGVVPMPPSDENPFNNPESLTPMDGKRGFGESKVHLLQTPGSAIYSDDKAAGYFGSRDMDAKSDAGASALREGDMFRNLETREELAEKGNEVTTTPIEERPKSASRVRWLVLVYVLTWWCPDWAIRIIGRMPRQDIRMAWREKVAINFIIWLSCAFVVFFMVGFPRIICPTQHVFSPSELTSYDGKNSDAYVAIRGNVFDLGAFIPQHYPSIVPASALEKYAGTDATNLFPVQVSAMCQGTDPDGTIDAAVQLNYQNRNYTGQNLISTTDNNAQYHDFRWATNDSRPAWFTEQMIFLRGHYWKGSVGYSPQYLKTLAKKSNQVAYINNRVYDFTDYIAGGRAPQYPPGEERPDTLPDSNFMDSRVVDLFSQRSGEDVTKYWDALNIDTGLRDRMQICLDNLFYVGQLDTRDSPKCQFAKYILLAVSIMLVSVICFKFLAALQFGKKNIPENLDKFIICTVPAYTEDEDSLRRALDSAARTRYDDKRKLLFVICDGMIIGQGNDRPTPRIVLDILGVPETVDPEPLSFESLGEGQKQHNMGKVYSGLYEVQGHIVPFIVVVKVGKPSEVSRPGNRGKRDSQMILMRFLNRVHYNLAMTPLELELHHQIRNVIGVNPTFYEFLLQIDADTVVAPDSCTRFVSAMINDTKIIAVCGETALTNAKASFITMMQVYEYYISHNLTKAFESLFGSVTCLPGCFTMYRIRAAETGKPLFVSREIVNDYSETRVDTLHMKNLLHLGEDRFLTTLLMKYHSKYKTKYIMRAHAWTIAPDSWAVFMSQRRRWINSTVHNLIEVIPLQQLCGFCCFSMRFVVFLDLLSTIVQPVIVGYIVYLIVQVATNPASTATTAFILIAAIYGLQAIIFIVRRKWEMVGWMIIYILATPIFSFCLPLIAFWNMDDFSWGNTRMVTGEKGKQILVSDEGKFNPDDIPRKKWEEYQAELWDAQTRDDAQSEMSGISYGTKSWHPAASEYGYAMSQHNMSTLSVPHMPHNGSRMSLLTSDNGMGMQQRDYSASDIDMSDMPNDDAILAEIREILATADLMTVTKKSIKAELERRFGVPMDSRRQYIGSATEAILSGQL.

Residues 1 to 778 (MSSAPTTQQN…CWRQIVRAGD (778 aa)) form the Myosin motor domain. Residue 95–102 (GESGTGKT) coordinates ATP. N221, N520, and N558 each carry an N-linked (GlcNAc...) asparagine glycan. Positions 585–650 (AVQQASVASK…PKSADTQQGA (66 aa)) are disordered. Residues 658-682 (LDNINKSLTAPNTNPYFFFCLKPND) are actin-binding. An N-linked (GlcNAc...) asparagine glycan is attached at N662. A run of 2 helical transmembrane segments spans residues 887 to 907 (WLVLVYVLTWWCPDWAIRIIG) and 922 to 942 (VAINFIIWLSCAFVVFFMVGF). The 59-residue stretch at 950-1008 (QHVFSPSELTSYDGKNSDAYVAIRGNVFDLGAFIPQHYPSIVPASALEKYAGTDATNLF) folds into the Cytochrome b5 heme-binding domain. N-linked (GlcNAc...) asparagine glycosylation is found at N1037 and N1061. A helical transmembrane segment spans residues 1199–1219 (ILLAVSIMLVSVICFKFLAAL). N-linked (GlcNAc...) asparagine glycans are attached at residues N1422, N1456, and N1562. Helical transmembrane passes span 1587-1607 (FVVFLDLLSTIVQPVIVGYIV), 1621-1641 (ATTAFILIAAIYGLQAIIFIV), and 1650-1670 (WMIIYILATPIFSFCLPLIAF). N-linked (GlcNAc...) asparagine glycans are attached at residues N1755 and N1767. Residues 1797–1852 (MPNDDAILAEIREILATADLMTVTKKSIKAELERRFGVPMDSRRQYIGSATEAILS) enclose the DEK-C domain.

It in the N-terminal section; belongs to the TRAFAC class myosin-kinesin ATPase superfamily. Myosin family. The protein in the C-terminal section; belongs to the chitin synthase family. Class V subfamily.

Its subcellular location is the apical cell membrane. It localises to the cell septum. The protein localises to the cell tip. The catalysed reaction is [(1-&gt;4)-N-acetyl-beta-D-glucosaminyl](n) + UDP-N-acetyl-alpha-D-glucosamine = [(1-&gt;4)-N-acetyl-beta-D-glucosaminyl](n+1) + UDP + H(+). Its function is as follows. Polymerizes chitin, a structural polymer of the cell wall and septum, by transferring the sugar moiety of UDP-GlcNAc to the non-reducing end of the growing chitin polymer. This Zymoseptoria tritici (strain CBS 115943 / IPO323) (Speckled leaf blotch fungus) protein is Chitin synthase 5.